The following is a 60-amino-acid chain: Cytotoxin SP15d (60 aa).

4 disulfide bridges follow: cysteine 3–cysteine 21, cysteine 14–cysteine 38, cysteine 42–cysteine 53, and cysteine 54–cysteine 59.

Belongs to the three-finger toxin family. Short-chain subfamily. Type IA cytotoxin sub-subfamily. Monomer in solution; Homodimer and oligomer in the presence of negatively charged lipids forming a pore with a size ranging between 20 and 30 Angstroms. In terms of tissue distribution, expressed by the venom gland.

The protein resides in the secreted. It is found in the target cell membrane. Its function is as follows. Shows cytolytic activity on many different cells by forming pore in lipid membranes. In vivo, increases heart rate or kills the animal by cardiac arrest. In addition, it binds to heparin with high affinity, interacts with Kv channel-interacting protein 1 (KCNIP1) in a calcium-independent manner, and binds to integrin alpha-V/beta-3 (ITGAV/ITGB3) with moderate affinity. This chain is Cytotoxin SP15d, found in Naja atra (Chinese cobra).